Here is a 655-residue protein sequence, read N- to C-terminus: Phosphatidylinositol-3,5-bisphosphate 3-phosphatase MTMR6 (655 aa).

One can recognise a GRAM domain in the interval 1-101; sequence MEHIRTTKVE…YNSLLQLSKQ (101 aa). Residues 2 to 141 form an interaction with RAB1B region; that stretch reads EHIRTTKVEQ…AEYERMGVPN (140 aa). Tyrosine 108 is subject to Phosphotyrosine. Residues 124–537 form the Myotubularin phosphatase domain; it reads GWQLIDLAAE…FNFKFWRNMY (414 aa). A 1,2-diacyl-sn-glycero-3-phospho-(1D-myo-inositol-3,5-bisphosphate)-binding residues include asparagine 286, asparagine 311, and isoleucine 312. Asparagine 286, asparagine 311, and isoleucine 312 together coordinate a 1,2-diacyl-sn-glycero-3-phospho-(1D-myo-inositol-3-phosphate). Cysteine 374 functions as the Phosphocysteine intermediate in the catalytic mechanism. The a 1,2-diacyl-sn-glycero-3-phospho-(1D-myo-inositol-3,5-bisphosphate) site is built by serine 375, aspartate 376, glycine 377, tryptophan 378, aspartate 379, arginine 380, lysine 416, and arginine 420. Serine 375, aspartate 376, glycine 377, tryptophan 378, aspartate 379, and arginine 380 together coordinate a 1,2-diacyl-sn-glycero-3-phospho-(1D-myo-inositol-3-phosphate). Residue arginine 420 coordinates a 1,2-diacyl-sn-glycero-3-phospho-(1D-myo-inositol-3-phosphate). A coiled-coil region spans residues 547–581; it reads RQSVLNIIMNMNEQNKQLEEDVKDLEAKIKQCKSG. 3 positions are modified to phosphoserine: serine 595, serine 623, and serine 645.

Belongs to the protein-tyrosine phosphatase family. Non-receptor class myotubularin subfamily. As to quaternary structure, homodimer. Heterodimer (via C-terminus) with MTMR9 (via C-terminus). Interacts with ALKBH4. Interacts with KCNN4. Interacts (via GRAM domain) with RAB1B (in GDP-bound form); the interaction regulates MTMR6 recruitment to the endoplasmic reticulum-Golgi intermediate compartment.

It is found in the cytoplasm. Its subcellular location is the endoplasmic reticulum. The protein resides in the cell projection. It localises to the ruffle membrane. The protein localises to the endoplasmic reticulum-Golgi intermediate compartment. It is found in the perinuclear region. It carries out the reaction a 1,2-diacyl-sn-glycero-3-phospho-(1D-myo-inositol-3,5-bisphosphate) + H2O = a 1,2-diacyl-sn-glycero-3-phospho-(1D-myo-inositol-5-phosphate) + phosphate. It catalyses the reaction a 1,2-diacyl-sn-glycero-3-phospho-(1D-myo-inositol-3-phosphate) + H2O = a 1,2-diacyl-sn-glycero-3-phospho-(1D-myo-inositol) + phosphate. The enzyme catalyses 1,2-dioctanoyl-sn-glycero-3-phospho-(1D-myo-inositol-3,5-bisphosphate) + H2O = 1,2-dioctanoyl-sn-glycero-3-phospho-(1D-myo-inositol-5-phosphate) + phosphate. The catalysed reaction is 1,2-dioctanoyl-sn-glycero-3-phospho-(1-D-myo-inositol-3-phosphate) + H2O = 1,2-dioctanoyl-sn-glycero-3-phospho-(1D-myo-inositol) + phosphate. With respect to regulation, allosterically activated by phosphatidylserine and/or phosphatidylinositol 4-phosphate (PtdIns(4)P), and phosphatidylinositol 5-phosphate (PtdIns(5)P). Interaction with MTMR9 increases catalytic activity towards phosphatidylinositol 3,5-bisphosphate. Its function is as follows. Lipid phosphatase that specifically dephosphorylates the D-3 position of phosphatidylinositol 3-phosphate and phosphatidylinositol 3,5-bisphosphate, generating phosphatidylinositol and phosphatidylinositol 5-phosphate. Binds with high affinity to phosphatidylinositol 3,5-bisphosphate (PtdIns(3,5)P2) but also to phosphatidylinositol 3-phosphate (PtdIns(3)P), phosphatidylinositol 4-phosphate (PtdIns(4)P), and phosphatidylinositol 5-phosphate (PtdIns(5)P), phosphatidic acid and phosphatidylserine. Negatively regulates ER-Golgi protein transport. Probably in association with MTMR9, plays a role in the late stages of macropinocytosis by dephosphorylating phosphatidylinositol 3-phosphate in membrane ruffles. Acts as a negative regulator of KCNN4/KCa3.1 channel activity in CD4(+) T-cells possibly by decreasing intracellular levels of phosphatidylinositol 3-phosphate. Negatively regulates proliferation of reactivated CD4(+) T-cells. In complex with MTMR9, negatively regulates DNA damage-induced apoptosis. The formation of the MTMR6-MTMR9 complex stabilizes both MTMR6 and MTMR9 protein levels. In Rattus norvegicus (Rat), this protein is Phosphatidylinositol-3,5-bisphosphate 3-phosphatase MTMR6.